Consider the following 345-residue polypeptide: Growth hormone-inducible transmembrane protein (345 aa).

A mitochondrion-targeting transit peptide spans 1-45; that stretch reads MLAARLVCLRTLPSRVFHPAFTKASPVVKNSITKNQWLLTPSREY. Topologically, residues 46 to 82 are mitochondrial matrix; sequence ATKTRIGIRRGRTGQELKEAALEPSMEKIFKIDQMGR. The helical transmembrane segment at 83–103 threads the bilayer; sequence WFVAGGAAVGLGALCYYGLGL. Topologically, residues 104–125 are mitochondrial intermembrane; sequence SNEIGAIEKAVIWPQYVKDRIH. The chain crosses the membrane as a helical span at residues 126–146; sequence STYMYLAGSIGLTALSAIAIS. Residues 147 to 159 lie on the Mitochondrial matrix side of the membrane; the sequence is RTPVLMNFMMRGS. A helical transmembrane segment spans residues 160-180; the sequence is WVTIGVTFAAMVGAGMLVRSI. Over 181 to 190 the chain is Mitochondrial intermembrane; the sequence is PYDQSPGPKH. A helical transmembrane segment spans residues 191 to 211; sequence LAWLLHSGVMGAVVAPLTILG. At 212–213 the chain is on the mitochondrial matrix side; that stretch reads GP. A helical transmembrane segment spans residues 214-234; that stretch reads LLIRAAWYTAGIVGGLSTVAM. The Mitochondrial intermembrane portion of the chain corresponds to 235-244; sequence CAPSEKFLNM. Residues 245-265 traverse the membrane as a helical segment; sequence GAPLGVGLGLVFVSSLGSMFL. Residues 266–271 lie on the Mitochondrial matrix side of the membrane; that stretch reads PPTTVA. The chain crosses the membrane as a helical span at residues 272 to 292; that stretch reads GATLYSVAMYGGLVLFSMFLL. Residues 293–345 lie on the Mitochondrial intermembrane side of the membrane; the sequence is YDTQKVIKRAEVSPMYGVQKYDPINSMLSIYMDTLNIFMRVATMLATGGNRKK.

Belongs to the BI1 family. In terms of assembly, interacts with LETM1. Interacts with AFG3L2. Post-translationally, undergoes AFG3L2-mediated proteolytic degradation, upon hyperpolarization of mitochondria.

It localises to the mitochondrion inner membrane. It carries out the reaction Ca(2+)(in) + 2 H(+)(out) = Ca(2+)(out) + 2 H(+)(in). The catalysed reaction is K(+)(in) + H(+)(out) = K(+)(out) + H(+)(in). Its function is as follows. Plays an important role in maintenance of mitochondrial morphology and in mediating either calcium or potassium/proton antiport. Mediates proton-dependent calcium efflux from mitochondrion. Also functions as an electroneutral mitochondrial proton/potassium exchanger. Required for the mitochondrial tubular network and cristae organization. Involved in apoptotic release of cytochrome c. Inhibits the proteolytic activity of AFG3L2, stimulating respiration and stabilizing respiratory enzymes in actively respiring mitochondria. However, when mitochondria become hyperpolarized, GHITM loses its inhibitory activity toward AFG3L2 and the now the active AFG3L2 turns first on GHITM and, if hyperpolarization persists, on other proteins of the mitochondria, leading to a broad remodeling of the mitochondrial proteome. The protein is Growth hormone-inducible transmembrane protein (GHITM) of Homo sapiens (Human).